The sequence spans 514 residues: G-protein coupled receptor Mth (514 aa).

The N-terminal stretch at 1–24 (MKTLLVLRISTVILVVLVIQKSYA) is a signal peptide. At 25–218 (DILECDYFDT…CLIVPSITGQ (194 aa)) the chain is on the extracellular side. 5 disulfide bridges follow: cysteine 29–cysteine 83, cysteine 85–cysteine 90, cysteine 94–cysteine 188, cysteine 95–cysteine 106, and cysteine 150–cysteine 209. N-linked (GlcNAc...) asparagine glycosylation is present at asparagine 45. Residues asparagine 109, asparagine 123, asparagine 170, and asparagine 198 are each glycosylated (N-linked (GlcNAc...) asparagine). The helical transmembrane segment at 219-239 (TVVMISSLICMVLTIAVYLFV) threads the bilayer. Over 240-248 (KKLQNLHGK) the chain is Cytoplasmic. The helical transmembrane segment at 249–269 (CFICYMVCLFMGYLFLLLDLW) threads the bilayer. At 270–278 (QISISFCKP) the chain is on the extracellular side. Residues 279-299 (AGFLGYFFVMAAFFWLSVISL) traverse the membrane as a helical segment. Residues 300-320 (HLWNTFRGSSHKANRFLFEHR) lie on the Cytoplasmic side of the membrane. A helical membrane pass occupies residues 321–341 (FLAYNTYAWGMAVVLTGITVL). At 342 to 370 (ADNIVENQDWNPRVGHEGHCWIYTQAWSA) the chain is on the extracellular side. A helical transmembrane segment spans residues 371–391 (MLYFYGPMVFLIAFNITMFIL). Residues 392-424 (TAKRILGVKKDIQNFAHRQERKQKLNSDKQTYT) lie on the Cytoplasmic side of the membrane. A helical membrane pass occupies residues 425 to 445 (FFLRLFIIMGLSWSLEIGSYF). Residues 446 to 454 (SQSNQTWAN) lie on the Extracellular side of the membrane. An N-linked (GlcNAc...) asparagine glycan is attached at asparagine 449. The helical transmembrane segment at 455–475 (VFLVADYLNWSQGIIIFILFV) threads the bilayer. The Cytoplasmic segment spans residues 476-514 (LKRSTWRLLQESIRGEGEEVNNSEEEISLENTTTRNVLL).

It belongs to the G-protein coupled receptor 2 family. Mth subfamily. In terms of assembly, homodimer.

The protein localises to the cell membrane. Functionally, involved in biological aging and stress response. Essential for adult survival. Required in the presynaptic motor neuron to up-regulate neurotransmitter exocytosis at larval glutamatergic neuromuscular junctions (NMJs). Regulates a step associated with docking and clustering of vesicles at release sites. SP/Acp70A and sun are agonists that activate mth in vitro. This Drosophila melanogaster (Fruit fly) protein is G-protein coupled receptor Mth (mth).